The chain runs to 327 residues: Serine/threonine-protein phosphatase PP1-beta catalytic subunit (327 aa).

At Ala2 the chain carries N-acetylalanine. Mn(2+)-binding residues include Asp63, His65, Asp91, and Asn123. The active-site Proton donor is His124. His172 and His247 together coordinate Mn(2+). The segment at 305–327 (QYGGLNSGRPVTPPRTANPPKKR) is disordered.

This sequence belongs to the PPP phosphatase family. PP-1 subfamily. Requires Mn(2+) as cofactor.

Its subcellular location is the cytoplasm. It localises to the nucleus. It catalyses the reaction O-phospho-L-seryl-[protein] + H2O = L-seryl-[protein] + phosphate. It carries out the reaction O-phospho-L-threonyl-[protein] + H2O = L-threonyl-[protein] + phosphate. Protein phosphatase that associates with over 200 regulatory proteins to form highly specific holoenzymes which dephosphorylate hundreds of biological targets. Protein phosphatase (PP1) is essential for cell division, it participates in the regulation of glycogen metabolism, muscle contractility and protein synthesis. Involved in regulation of ionic conductances and long-term synaptic plasticity. The sequence is that of Serine/threonine-protein phosphatase PP1-beta catalytic subunit (ppp1cb) from Xenopus laevis (African clawed frog).